Reading from the N-terminus, the 116-residue chain is MPNYRGGRINEEFKREISNIIQNEIKDPRLTAMISVTDVKVTKDLRYAKVYVSIFSTKEEEKKDNFTALKSASGFIRKILGQRINVRHNPEILFELDDSINYAMHIDELIQKVKDK.

It belongs to the RbfA family. In terms of assembly, monomer. Binds 30S ribosomal subunits, but not 50S ribosomal subunits or 70S ribosomes.

The protein resides in the cytoplasm. One of several proteins that assist in the late maturation steps of the functional core of the 30S ribosomal subunit. Associates with free 30S ribosomal subunits (but not with 30S subunits that are part of 70S ribosomes or polysomes). Required for efficient processing of 16S rRNA. May interact with the 5'-terminal helix region of 16S rRNA. The chain is Ribosome-binding factor A from Clostridium botulinum (strain Alaska E43 / Type E3).